We begin with the raw amino-acid sequence, 31 residues long: MAILISYFCFLLIFFLFTLILFFGLNKIRLI.

A helical transmembrane segment spans residues 3–23 (ILISYFCFLLIFFLFTLILFF).

This sequence belongs to the PetL family. In terms of assembly, the 4 large subunits of the cytochrome b6-f complex are cytochrome b6, subunit IV (17 kDa polypeptide, PetD), cytochrome f and the Rieske protein, while the 4 small subunits are PetG, PetL, PetM and PetN. The complex functions as a dimer.

It localises to the plastid. The protein resides in the chloroplast thylakoid membrane. Functionally, component of the cytochrome b6-f complex, which mediates electron transfer between photosystem II (PSII) and photosystem I (PSI), cyclic electron flow around PSI, and state transitions. PetL is important for photoautotrophic growth as well as for electron transfer efficiency and stability of the cytochrome b6-f complex. In Gnetum parvifolium (Small-leaved jointfir), this protein is Cytochrome b6-f complex subunit 6.